We begin with the raw amino-acid sequence, 140 residues long: Large ribosomal subunit protein bL17 (140 aa).

The interval 119–140 (DTTAKGQDSGPVQVEEQENEEA) is disordered.

This sequence belongs to the bacterial ribosomal protein bL17 family. In terms of assembly, part of the 50S ribosomal subunit. Contacts protein L32.

The polypeptide is Large ribosomal subunit protein bL17 (Zymomonas mobilis subsp. mobilis (strain ATCC 31821 / ZM4 / CP4)).